The primary structure comprises 89 residues: MVRLVITYDIRKDKIRNKLFRLLERYGAWKQYSVFELEINPVHKVELFHSIADLIEDTDRVRIYDLCERCQGKITELGEVSPDKMQVVI.

Asp-9 contacts Mg(2+).

This sequence belongs to the CRISPR-associated endoribonuclease Cas2 protein family. In terms of assembly, homodimer, forms a heterotetramer with a Cas1 homodimer. The cofactor is Mg(2+).

Functionally, CRISPR (clustered regularly interspaced short palindromic repeat), is an adaptive immune system that provides protection against mobile genetic elements (viruses, transposable elements and conjugative plasmids). CRISPR clusters contain sequences complementary to antecedent mobile elements and target invading nucleic acids. CRISPR clusters are transcribed and processed into CRISPR RNA (crRNA). Functions as a ssRNA-specific endoribonuclease. Involved in the integration of spacer DNA into the CRISPR cassette. The chain is CRISPR-associated endoribonuclease Cas2 2 from Methanospirillum hungatei JF-1 (strain ATCC 27890 / DSM 864 / NBRC 100397 / JF-1).